A 104-amino-acid chain; its full sequence is Vegetative-specific protein H7 (104 aa).

The HTH cro/C1-type domain occupies 43 to 97 (IQRARNALKMTQKELAFKINERPGVINEYESGSAIPSQAVLSKLEKALNVKLRGK). The segment at residues 54-73 (QKELAFKINERPGVINEYES) is a DNA-binding region (H-T-H motif).

The sequence is that of Vegetative-specific protein H7 (cinD-1) from Dictyostelium discoideum (Social amoeba).